Reading from the N-terminus, the 475-residue chain is Ribulose bisphosphate carboxylase large chain (475 aa).

A propeptide spanning residues 1–2 is cleaved from the precursor; sequence MS. At P3 the chain carries N-acetylproline. At K14 the chain carries N6,N6,N6-trimethyllysine. Substrate is bound by residues N123 and T173. Catalysis depends on K175, which acts as the Proton acceptor. Substrate is bound at residue K177. Residues K201, D203, and E204 each contribute to the Mg(2+) site. Position 201 is an N6-carboxylysine (K201). H294 (proton acceptor) is an active-site residue. Substrate-binding residues include R295, H327, and S379.

It belongs to the RuBisCO large chain family. Type I subfamily. In terms of assembly, heterohexadecamer of 8 large chains and 8 small chains; disulfide-linked. The disulfide link is formed within the large subunit homodimers. It depends on Mg(2+) as a cofactor. In terms of processing, the disulfide bond which can form in the large chain dimeric partners within the hexadecamer appears to be associated with oxidative stress and protein turnover.

It localises to the plastid. It is found in the chloroplast. The enzyme catalyses 2 (2R)-3-phosphoglycerate + 2 H(+) = D-ribulose 1,5-bisphosphate + CO2 + H2O. It catalyses the reaction D-ribulose 1,5-bisphosphate + O2 = 2-phosphoglycolate + (2R)-3-phosphoglycerate + 2 H(+). Functionally, ruBisCO catalyzes two reactions: the carboxylation of D-ribulose 1,5-bisphosphate, the primary event in carbon dioxide fixation, as well as the oxidative fragmentation of the pentose substrate in the photorespiration process. Both reactions occur simultaneously and in competition at the same active site. In Picea abies (Norway spruce), this protein is Ribulose bisphosphate carboxylase large chain.